We begin with the raw amino-acid sequence, 774 residues long: MPPKKRMKNGSSLKSTSKKGEKSRNIITIQDLFSKREAQLTDTPNKLLTDHDQSASDYAYALKLQQLFDSENQATAPEKLPKDVIIPEEEYHTDTFNVVKESNDKPKENLVTSEECKASFFSTDSVNKDSTIDYDALQKDPLTYVKSCRARFVSKDTKSFSYSSLANTFSLISSTKSRIRIVTLLTNFLLTLLYADPDSLIATVWLCTNSIAPNFYGKNLGVGPAMYSKALKEVCGITASALKNLWNKYGDPGDVAFEAKVSVRTLSRPEPLTIKKVYSTLLKIADSNGNGAQNRKLELTKFLLISSNAEEVRYIGRSIMQNLRIGAVQNTMLASLSKAFFIFDNQNEIFNFNSDSLQQQFRQGEEIVKQSFFQVPDYNILVATLLREGIENLKDNMSIRPGIPVKPMLGSITKNLQHMLERLTDHNFSCEFKYDGQRAQIHCDRLGNIKIFSRHLEEITGRFPDVIEVAQLALKHSCDFIIEGELVAIDKSNGQILDFQKLSTRERKKVTVADITIDVCVFVFDIMFCDGKSCLQMPLIERRRMFFEHFNLIPNRFQFVSSLETNEEQSIQEFFSLAITNKCEGLMVKVLNGTNSKFPSTYEPDKRGEGWIKVKQDYDDEFESLDLVPIGAWYGNGRKAGWFSPILLAVYNPDTGAYEAVCKCMSGFSDQFYKELTQKYSLESGNSSLKPIYNFCETGKVTPQIYFAPQEVWEIKGAQITSSPAYKAALGLIQDDRGLSIRFPRFIRVRSDKGPEDASTNSILADMYMKQLNT.

The disordered stretch occupies residues 1–25 (MPPKKRMKNGSSLKSTSKKGEKSRN). Lys-433 serves as the catalytic N6-AMP-lysine intermediate.

It belongs to the ATP-dependent DNA ligase family.

The protein localises to the nucleus. The catalysed reaction is ATP + (deoxyribonucleotide)n-3'-hydroxyl + 5'-phospho-(deoxyribonucleotide)m = (deoxyribonucleotide)n+m + AMP + diphosphate.. The chain is DNA ligase 3 (adl1) from Schizosaccharomyces pombe (strain 972 / ATCC 24843) (Fission yeast).